A 79-amino-acid polypeptide reads, in one-letter code: Short neurotoxin 7 (79 aa).

The N-terminal stretch at 1–21 (MKTLLLTLVMVTIMCLDLGYT) is a signal peptide. Cystine bridges form between C24-C41, C34-C59, C63-C71, and C72-C77.

This sequence belongs to the three-finger toxin family. Short-chain subfamily. Type III alpha-neurotoxin sub-subfamily. As to expression, expressed by the venom gland.

The protein resides in the secreted. In terms of biological role, binds with high affinity to muscle nicotinic acetylcholine receptor (nAChR) and hinders acetylcholine binding to the receptor, thereby impairing neuromuscular transmission. Competes with the binding of alpha-bungarotoxin on muscle AChR (from Torpedo) (IC(50)=0.30 uM). In vivo, causes muscle paralysis, spasms and increased respiration. The sequence is that of Short neurotoxin 7 from Pseudonaja textilis (Eastern brown snake).